Here is a 264-residue protein sequence, read N- to C-terminus: NAD kinase 1 (264 aa).

Residue Asp45 is the Proton acceptor of the active site. NAD(+) is bound by residues 45–46 (DG), Gly46, 122–123 (NE), Arg148, Asp150, Ser158, 161–166 (TAYNKS), and His223.

This sequence belongs to the NAD kinase family. As to quaternary structure, homotetramer. It depends on a divalent metal cation as a cofactor.

The protein localises to the cytoplasm. It carries out the reaction NAD(+) + ATP = ADP + NADP(+) + H(+). Competitively inhibited by 5'-thioacetyladenosine (TAA) and di-(5'-thioadenosine) (DTA). In terms of biological role, involved in the regulation of the intracellular balance of NAD and NADP, and is a key enzyme in the biosynthesis of NADP. Catalyzes specifically the phosphorylation on 2'-hydroxyl of the adenosine moiety of NAD to yield NADP. This Listeria monocytogenes serovar 1/2a (strain ATCC BAA-679 / EGD-e) protein is NAD kinase 1.